Consider the following 495-residue polypeptide: MSSLTMQVTKRLETFLQGTKKLYIDGKFVPSASGATFDTPNPATGETLMTLYEAQAADVDKAVKAARKAFDQGEWRTMSPASRSRLMYKLADLMEEHKTELAQLETLDNGKPINETTNGDIPLAIEHMRYYAGWCTKITGQTIPVSGAYFNYTRHEPVGVVGQIIPWNFPLLMAMWKMGAALATGCTIVLKPAEQTPLSALYLAELIDQAGFPAGVINIIPGFGEDAGEALTNHEAVDKIAFTGSTEIGKKIMSTAAKSIKRVTLELGGKSPNILLPDANLKKAIPGALNGVMFNQGQVCCAGSRVFIHKDQYDEVVDEMASYAESLRQGAGLHKDTQIGPLVSKEQHERVLSYIQKGKDEGAKAVTGGSCPFEAGYFVAPTVFANVEDEMTIAKEEIFGPVLTAIPYETVDEVIERANHSEYGLAAGLWTENVKQAHYIADRLQAGTVWVNCYNVFDAASPFGGYKQSGLGREMGSYALDNYTEVKSVWVNLED.

244–249 (GSTEIG) contributes to the NAD(+) binding site. Active-site residues include Glu266 and Cys300.

It belongs to the aldehyde dehydrogenase family.

It catalyses the reaction an aldehyde + NAD(+) + H2O = a carboxylate + NADH + 2 H(+). The sequence is that of Putative aldehyde dehydrogenase DhaS (dhaS) from Bacillus subtilis (strain 168).